The sequence spans 183 residues: Ubiquinol-cytochrome c reductase iron-sulfur subunit (183 aa).

Residues 21 to 41 (LIYGTTAVGAVGVALAVWPFI) form a helical membrane-spanning segment. The region spanning 88–181 (IVVARAVDPA…YAFTDDTTVL (94 aa)) is the Rieske domain. [2Fe-2S] cluster-binding residues include Cys-121, His-123, Cys-145, and His-148. Cys-126 and Cys-147 are oxidised to a cystine.

It belongs to the Rieske iron-sulfur protein family. The main subunits of complex b-c1 are: cytochrome b, cytochrome c1 and the Rieske protein. It depends on [2Fe-2S] cluster as a cofactor.

The protein localises to the cell inner membrane. It carries out the reaction a quinol + 2 Fe(III)-[cytochrome c](out) = a quinone + 2 Fe(II)-[cytochrome c](out) + 2 H(+)(out). In terms of biological role, component of the ubiquinol-cytochrome c reductase complex (complex III or cytochrome b-c1 complex), which is a respiratory chain that generates an electrochemical potential coupled to ATP synthesis. The protein is Ubiquinol-cytochrome c reductase iron-sulfur subunit (petA) of Rhodospirillum rubrum.